The chain runs to 880 residues: Alanine--tRNA ligase (880 aa).

4 residues coordinate Zn(2+): His566, His570, Cys668, and His672.

It belongs to the class-II aminoacyl-tRNA synthetase family. The cofactor is Zn(2+).

Its subcellular location is the cytoplasm. It carries out the reaction tRNA(Ala) + L-alanine + ATP = L-alanyl-tRNA(Ala) + AMP + diphosphate. Its function is as follows. Catalyzes the attachment of alanine to tRNA(Ala) in a two-step reaction: alanine is first activated by ATP to form Ala-AMP and then transferred to the acceptor end of tRNA(Ala). Also edits incorrectly charged Ser-tRNA(Ala) and Gly-tRNA(Ala) via its editing domain. The sequence is that of Alanine--tRNA ligase from Acetivibrio thermocellus (strain ATCC 27405 / DSM 1237 / JCM 9322 / NBRC 103400 / NCIMB 10682 / NRRL B-4536 / VPI 7372) (Clostridium thermocellum).